The primary structure comprises 263 residues: Hydroxyacylglutathione hydrolase (263 aa).

Zn(2+) is bound by residues H56, H58, D60, H61, H115, D135, and H175.

Belongs to the metallo-beta-lactamase superfamily. Glyoxalase II family. As to quaternary structure, monomer. Requires Zn(2+) as cofactor.

The enzyme catalyses an S-(2-hydroxyacyl)glutathione + H2O = a 2-hydroxy carboxylate + glutathione + H(+). The protein operates within secondary metabolite metabolism; methylglyoxal degradation; (R)-lactate from methylglyoxal: step 2/2. Functionally, thiolesterase that catalyzes the hydrolysis of S-D-lactoyl-glutathione to form glutathione and D-lactic acid. This Polaromonas sp. (strain JS666 / ATCC BAA-500) protein is Hydroxyacylglutathione hydrolase.